We begin with the raw amino-acid sequence, 144 residues long: MDEMNLGPEAQELHDSIVAEIQSGVLKLKDGLPFGTGDETEMQYDVTLRELTAGDMIDAQAAAEKLVMSKEGPVLVSSPSRMGLEMLRRQIASVGCIKGPLSMALIRKLSVDDFQRLSLATEMYDMAVAASLTQERGRVAAVPE.

It belongs to the mulikevirus tail assembly protein family.

It localises to the host cytoplasm. Its function is as follows. Required for tail assembly. Together with FS-gp41, may act as a chaperone mediating the interaction between the tape measure protein (TMP) and the tail tube protein (TTP) thereby directing the polymerization of TTP to form a tail of the correct length (Potential). This chain is Probable tail assembly protein gp41, found in Enterobacteriaceae (Bacteriophage Mu).